The primary structure comprises 310 residues: Proline-rich 28 kDa antigen (310 aa).

The signal sequence occupies residues Met1–Ala32. The segment at Gln278 to Arg310 is disordered.

This sequence to M.leprae ML0031.

This is Proline-rich 28 kDa antigen (mtc28) from Mycobacterium bovis (strain ATCC BAA-935 / AF2122/97).